The sequence spans 206 residues: Elongation factor Ts (206 aa).

The interval 81–84 (TDFV) is involved in Mg(2+) ion dislocation from EF-Tu.

It belongs to the EF-Ts family.

It is found in the cytoplasm. In terms of biological role, associates with the EF-Tu.GDP complex and induces the exchange of GDP to GTP. It remains bound to the aminoacyl-tRNA.EF-Tu.GTP complex up to the GTP hydrolysis stage on the ribosome. The polypeptide is Elongation factor Ts (Maridesulfovibrio salexigens (strain ATCC 14822 / DSM 2638 / NCIMB 8403 / VKM B-1763) (Desulfovibrio salexigens)).